The sequence spans 235 residues: Elongation factor Tu (235 aa).

Positions 1–125 (KNMITGAAQM…EVDEYIPTPE (125 aa)) constitute a tr-type G domain. GTP is bound at residue 47–50 (NKED).

Belongs to the TRAFAC class translation factor GTPase superfamily. Classic translation factor GTPase family. EF-Tu/EF-1A subfamily. Monomer.

The protein localises to the cytoplasm. The catalysed reaction is GTP + H2O = GDP + phosphate + H(+). In terms of biological role, GTP hydrolase that promotes the GTP-dependent binding of aminoacyl-tRNA to the A-site of ribosomes during protein biosynthesis. This chain is Elongation factor Tu (tufA), found in Gloeothece membranacea (strain PCC 6501 / SAG 26.84).